The following is a 313-amino-acid chain: Ribonuclease HIII (313 aa).

Residues 98–313 (YNCIGSDEAG…REKALKLIKK (216 aa)) form the RNase H type-2 domain. Residues Asp104, Glu105, and Asp208 each contribute to the a divalent metal cation site.

It belongs to the RNase HII family. RnhC subfamily. Mn(2+) is required as a cofactor. It depends on Mg(2+) as a cofactor.

Its subcellular location is the cytoplasm. The catalysed reaction is Endonucleolytic cleavage to 5'-phosphomonoester.. In terms of biological role, endonuclease that specifically degrades the RNA of RNA-DNA hybrids. This chain is Ribonuclease HIII, found in Macrococcus caseolyticus (strain JCSC5402) (Macrococcoides caseolyticum).